Reading from the N-terminus, the 238-residue chain is uncharacterized protein (238 aa).

Disordered regions lie at residues 1–51 and 214–238; these read MPCT…ASCA and ITVE…FPTA. Residues 16–31 show a composition bias toward low complexity; the sequence is ATWRTARPAPRRCGSC.

This is an uncharacterized protein from Streptomyces griseus.